The sequence spans 221 residues: Histidine biosynthesis bifunctional protein HisIE (221 aa).

Residues 1 to 121 (MNITKIDWQK…KKQQFANWAW (121 aa)) are phosphoribosyl-AMP cyclohydrolase. Residues 122-221 (FIKLEQHLKE…IGLHPEGGNK (100 aa)) are phosphoribosyl-ATP pyrophosphohydrolase.

The protein in the N-terminal section; belongs to the PRA-CH family. This sequence in the C-terminal section; belongs to the PRA-PH family.

It localises to the cytoplasm. The catalysed reaction is 1-(5-phospho-beta-D-ribosyl)-ATP + H2O = 1-(5-phospho-beta-D-ribosyl)-5'-AMP + diphosphate + H(+). It carries out the reaction 1-(5-phospho-beta-D-ribosyl)-5'-AMP + H2O = 1-(5-phospho-beta-D-ribosyl)-5-[(5-phospho-beta-D-ribosylamino)methylideneamino]imidazole-4-carboxamide. It functions in the pathway amino-acid biosynthesis; L-histidine biosynthesis; L-histidine from 5-phospho-alpha-D-ribose 1-diphosphate: step 2/9. The protein operates within amino-acid biosynthesis; L-histidine biosynthesis; L-histidine from 5-phospho-alpha-D-ribose 1-diphosphate: step 3/9. This is Histidine biosynthesis bifunctional protein HisIE (hisI) from Haemophilus influenzae (strain ATCC 51907 / DSM 11121 / KW20 / Rd).